The chain runs to 356 residues: Histidinol-phosphate aminotransferase (356 aa).

Residue Lys214 is modified to N6-(pyridoxal phosphate)lysine.

Belongs to the class-II pyridoxal-phosphate-dependent aminotransferase family. Histidinol-phosphate aminotransferase subfamily. Homodimer. Requires pyridoxal 5'-phosphate as cofactor.

The enzyme catalyses L-histidinol phosphate + 2-oxoglutarate = 3-(imidazol-4-yl)-2-oxopropyl phosphate + L-glutamate. It participates in amino-acid biosynthesis; L-histidine biosynthesis; L-histidine from 5-phospho-alpha-D-ribose 1-diphosphate: step 7/9. The sequence is that of Histidinol-phosphate aminotransferase from Escherichia fergusonii (strain ATCC 35469 / DSM 13698 / CCUG 18766 / IAM 14443 / JCM 21226 / LMG 7866 / NBRC 102419 / NCTC 12128 / CDC 0568-73).